Here is a 775-residue protein sequence, read N- to C-terminus: uncharacterized protein (775 aa).

Helical transmembrane passes span 16–36 (KLLIPIIAILFVPLIYSGVFL), 585–605 (PYILSMGLYVGGIMLTVVFPL), 625–645 (VMMLVGIIQSLIVATVLLLGI), 655–675 (FYVFTIITSLAFLAIIQFLAT), and 742–762 (GVLIGIALVMIALSITYFTML).

To L.lactis phage infection protein (PIP).

It is found in the cell membrane. This is an uncharacterized protein from Bacillus subtilis (strain 168).